We begin with the raw amino-acid sequence, 171 residues long: Lipoprotein signal peptidase (171 aa).

Transmembrane regions (helical) follow at residues 67–87 (YALLGLTLAATIFMILWLWRS) and 88–108 (TSKLIACALGLIIGGALGNAY). Catalysis depends on residues Asp118 and Asp136. A helical transmembrane segment spans residues 127–147 (FSWYVFNLADAAIVAGVALLL).

Belongs to the peptidase A8 family.

The protein localises to the cell inner membrane. It carries out the reaction Release of signal peptides from bacterial membrane prolipoproteins. Hydrolyzes -Xaa-Yaa-Zaa-|-(S,diacylglyceryl)Cys-, in which Xaa is hydrophobic (preferably Leu), and Yaa (Ala or Ser) and Zaa (Gly or Ala) have small, neutral side chains.. It functions in the pathway protein modification; lipoprotein biosynthesis (signal peptide cleavage). Its function is as follows. This protein specifically catalyzes the removal of signal peptides from prolipoproteins. This Methylocella silvestris (strain DSM 15510 / CIP 108128 / LMG 27833 / NCIMB 13906 / BL2) protein is Lipoprotein signal peptidase.